Consider the following 226-residue polypeptide: UPF0173 metal-dependent hydrolase Dgeo_0136 (226 aa).

This sequence belongs to the UPF0173 family.

This chain is UPF0173 metal-dependent hydrolase Dgeo_0136, found in Deinococcus geothermalis (strain DSM 11300 / CIP 105573 / AG-3a).